A 238-amino-acid chain; its full sequence is Dolichyldiphosphatase 1 (238 aa).

The next 4 helical transmembrane spans lie at 33 to 53 (LAYL…LIIF), 100 to 120 (PSSH…FLYL), 130 to 150 (FLDL…AFLV), and 162 to 182 (WSQV…WFIF).

It belongs to the dolichyldiphosphatase family.

It localises to the endoplasmic reticulum membrane. It catalyses the reaction a di-trans,poly-cis-dolichyl diphosphate + H2O = a di-trans,poly-cis-dolichyl phosphate + phosphate + H(+). It functions in the pathway protein modification; protein glycosylation. Its function is as follows. Required for efficient N-glycosylation. Necessary for maintaining optimal levels of dolichol-linked oligosaccharides. Hydrolyzes dolichyl pyrophosphate at a very high rate and dolichyl monophosphate at a much lower rate. Does not act on phosphatidate. This Callithrix jacchus (White-tufted-ear marmoset) protein is Dolichyldiphosphatase 1 (DOLPP1).